Here is a 458-residue protein sequence, read N- to C-terminus: Oxysterol-binding protein-related protein 3B (458 aa).

Disordered stretches follow at residues 47-66, 370-401, and 431-458; these read VINPEGSTDDAEEEASRGRW, DMSKSGYEKSSMEERQRAEKRTREEKGQAFTP, and RAAADNSEDNTDPKSIQFNPWQFQDLST. Residues 375–396 show a composition bias toward basic and acidic residues; that stretch reads GYEKSSMEERQRAEKRTREEKG. The span at 443–458 shows a compositional bias: polar residues; the sequence is PKSIQFNPWQFQDLST.

The protein belongs to the OSBP family. Expressed in roots, leaves, stems and flowers.

In terms of biological role, may be involved in the transport of sterols. This Arabidopsis thaliana (Mouse-ear cress) protein is Oxysterol-binding protein-related protein 3B (ORP3B).